The chain runs to 808 residues: Quinoprotein glucose dehydrogenase (808 aa).

The signal sequence occupies residues 1 to 33; sequence MSTTSRPGLWALITAAVFALCGAILTVGGAWVA. A run of 4 helical transmembrane segments spans residues 35–54, 59–76, 94–108, and 123–138; these read IGGP…TAFL, NPAA…TVIW, IVII…PFVS, and GAVG…SLFT. Asp-470 serves as the catalytic Proton acceptor. The interval 514–545 is disordered; sequence VPAPETPVPQGAAPGDHTSPTQPMSQLTLRPK. Residues 531–541 are compositionally biased toward polar residues; that stretch reads TSPTQPMSQLT.

The protein belongs to the bacterial PQQ dehydrogenase family. Pyrroloquinoline quinone serves as cofactor.

It localises to the cell inner membrane. It catalyses the reaction a ubiquinone + D-glucose = D-glucono-1,5-lactone + a ubiquinol. This is Quinoprotein glucose dehydrogenase (gdh) from Gluconobacter oxydans (strain 621H) (Gluconobacter suboxydans).